We begin with the raw amino-acid sequence, 379 residues long: Cytochrome b (379 aa).

4 helical membrane-spanning segments follow: residues 33-53 (FGSL…FLAM), 77-98 (WLIR…YIHI), 113-133 (WNIG…GYVL), and 178-198 (FFAF…VHLL). 2 residues coordinate heme b: His-83 and His-97. 2 residues coordinate heme b: His-182 and His-196. His-201 provides a ligand contact to a ubiquinone. The next 4 helical transmembrane spans lie at 226 to 246 (TKDF…VLYF), 288 to 308 (LGGV…PYIH), 320 to 340 (ISQF…WIGG), and 347 to 367 (FIII…IXMX).

Belongs to the cytochrome b family. The cytochrome bc1 complex contains 11 subunits: 3 respiratory subunits (MT-CYB, CYC1 and UQCRFS1), 2 core proteins (UQCRC1 and UQCRC2) and 6 low-molecular weight proteins (UQCRH/QCR6, UQCRB/QCR7, UQCRQ/QCR8, UQCR10/QCR9, UQCR11/QCR10 and a cleavage product of UQCRFS1). This cytochrome bc1 complex then forms a dimer. Heme b serves as cofactor.

The protein resides in the mitochondrion inner membrane. Functionally, component of the ubiquinol-cytochrome c reductase complex (complex III or cytochrome b-c1 complex) that is part of the mitochondrial respiratory chain. The b-c1 complex mediates electron transfer from ubiquinol to cytochrome c. Contributes to the generation of a proton gradient across the mitochondrial membrane that is then used for ATP synthesis. The chain is Cytochrome b (MT-CYB) from Thomomys umbrinus (Southern pocket gopher).